We begin with the raw amino-acid sequence, 977 residues long: Alanine--tRNA ligase (977 aa).

The disordered stretch occupies residues 512 to 535; it reads SQVDSKLQSSTPAGTGSYDSKQVS. Residues H618, H622, C720, and H724 each contribute to the Zn(2+) site.

It belongs to the class-II aminoacyl-tRNA synthetase family. Zn(2+) serves as cofactor.

It localises to the cytoplasm. The catalysed reaction is tRNA(Ala) + L-alanine + ATP = L-alanyl-tRNA(Ala) + AMP + diphosphate. In terms of biological role, catalyzes the attachment of alanine to tRNA(Ala) in a two-step reaction: alanine is first activated by ATP to form Ala-AMP and then transferred to the acceptor end of tRNA(Ala). Also edits incorrectly charged Ser-tRNA(Ala) and Gly-tRNA(Ala) via its editing domain. The protein is Alanine--tRNA ligase of Leptospira interrogans serogroup Icterohaemorrhagiae serovar copenhageni (strain Fiocruz L1-130).